Consider the following 105-residue polypeptide: Large ribosomal subunit protein bL21 (105 aa).

It belongs to the bacterial ribosomal protein bL21 family. As to quaternary structure, part of the 50S ribosomal subunit. Contacts protein L20.

This protein binds to 23S rRNA in the presence of protein L20. The chain is Large ribosomal subunit protein bL21 from Rhizobium johnstonii (strain DSM 114642 / LMG 32736 / 3841) (Rhizobium leguminosarum bv. viciae).